Here is a 333-residue protein sequence, read N- to C-terminus: Protein 2 (333 aa).

Disordered regions lie at residues 1 to 41 and 57 to 84; these read MTGR…SENA and LGAGNDYDETEADPADTYGDTEADLPPT. The span at 24–33 shows a compositional bias: polar residues; that stretch reads QETTKQTTSA. Over residues 62–79 the composition is skewed to acidic residues; the sequence is DYDETEADPADTYGDTEA.

The polypeptide is Protein 2 (Lactuca sativa (Garden lettuce)).